We begin with the raw amino-acid sequence, 305 residues long: Elongation factor Ts (305 aa).

Positions 79-82 are involved in Mg(2+) ion dislocation from EF-Tu; it reads TDFV.

This sequence belongs to the EF-Ts family.

Its subcellular location is the cytoplasm. In terms of biological role, associates with the EF-Tu.GDP complex and induces the exchange of GDP to GTP. It remains bound to the aminoacyl-tRNA.EF-Tu.GTP complex up to the GTP hydrolysis stage on the ribosome. The protein is Elongation factor Ts of Brucella anthropi (strain ATCC 49188 / DSM 6882 / CCUG 24695 / JCM 21032 / LMG 3331 / NBRC 15819 / NCTC 12168 / Alc 37) (Ochrobactrum anthropi).